A 423-amino-acid polypeptide reads, in one-letter code: F-box/LRR-repeat protein 2 (423 aa).

The region spanning 9 to 55 (GLINKKLPKELLLRIFSFLDIVTLCRCAQISKAWNILALDGSNWQRI) is the F-box domain. LRR repeat units follow at residues 61–87 (QTDV…SLRG), 88–113 (CIGV…NLNG), 114–139 (CTKI…DLTS), 140–165 (CVSI…NLSW), 166–191 (CDQI…LLRG), 192–217 (CTQL…NLQS), 218–243 (CSRI…CLSG), 244–269 (CSNL…EAAR), 270–295 (CSHL…DLEE), 296–321 (CILI…SLSH), 322–350 (CELI…ELDN), 351–375 (CLLI…ELYD), and 376–401 (CQQV…AYFA). The interaction with Calmodulin stretch occupies residues 80–90 (LRKLSLRGCIG). Lys-201 participates in a covalent cross-link: Glycyl lysine isopeptide (Lys-Gly) (interchain with G-Cter in ubiquitin). Position 404 is a phosphothreonine (Thr-404). Residue Cys-420 is the site of S-geranylgeranyl cysteine attachment. The CAAX motif motif lies at 420–423 (CVIL).

As to quaternary structure, part of the SCF (SKP1-CUL1-F-box) E3 ubiquitin-protein ligase complex SCF(FBXL2) composed of CUL1, SKP1, RBX1 and FBXL2. Interacts with calmodulin; may antagonize substrate ubiquitination by SCF(FBXL2). May interact with PIK3R1. Interacts with PTPN13. (Microbial infection) Interacts with hepatitis C virus non-structural protein 5A (NS5A) and less efficiently, with hepatitis C virus non-structural protein 5B (NS5B); a reaction crucial for hepatitis C virus RNA replication. Post-translationally, phosphorylated by GSK-beta (GSK3B), promoting recognition by FBXO3, leading to its ubiquitination by the SCF(FBXO3) complex. Ubiquitinated at Lys-201 by the SCF(FBXO3) complex in response to lipopolysaccharide (LPS), leading to its degradation by the proteasome. As to expression, expressed in brain, heart, kidney, liver, lung, pancreas and placenta.

It localises to the membrane. Its pathway is protein modification; protein ubiquitination. Its function is as follows. Calcium-activated substrate recognition component of the SCF (SKP1-cullin-F-box protein) E3 ubiquitin-protein ligase complex, SCF(FBXL2), which mediates the ubiquitination and subsequent proteasomal degradation of target proteins. Unlike many F-box proteins, FBXL2 does not seem to target phosphodegron within its substrates but rather calmodulin-binding motifs and is thereby antagonized by calmodulin. This is the case for the cyclins CCND2 and CCND3 which polyubiquitination and subsequent degradation are inhibited by calmodulin. Through CCND2 and CCND3 degradation induces cell-cycle arrest in G(0). SCF(FBXL2) also mediates PIK3R2 ubiquitination and proteasomal degradation thereby regulating phosphatidylinositol 3-kinase signaling and autophagy. PCYT1A monoubiquitination by SCF(FBXL2) and subsequent degradation regulates synthesis of phosphatidylcholine, which is utilized for formation of membranes and of pulmonary surfactant. The SCF(FBXL2) complex acts as a regulator of inflammation by mediating ubiquitination and degradation of TRAF proteins (TRAF1, TRAF2, TRAF3, TRAF4, TRAF5 and TRAF6). The SCF(FBXL2) complex acts as a negative regulator of the NLRP3 inflammasome by mediating ubiquitination and degradation of NLRP3. The polypeptide is F-box/LRR-repeat protein 2 (Homo sapiens (Human)).